We begin with the raw amino-acid sequence, 251 residues long: Adenylate kinase (251 aa).

46–51 (GAGKGT) lines the ATP pocket. The NMP stretch occupies residues 66-95 (ATGDMLRSQVQQQTPLGVEAKKIMDAGGLV). Residues Thr-67, Arg-72, 93 to 95 (GLV), 122 to 125 (GFPR), and Gln-129 contribute to the AMP site. The interval 163–200 (GRLVHPASGRSYHKVFNPPKKEMIDDITGEALVQRSDD) is LID. Residues Arg-164 and 173–174 (SY) each bind ATP. Residues Arg-197 and Arg-208 each coordinate AMP. Gln-236 is an ATP binding site.

This sequence belongs to the adenylate kinase family. AK2 subfamily. Monomer.

It localises to the cytoplasm. The protein resides in the cytosol. The protein localises to the mitochondrion intermembrane space. It catalyses the reaction AMP + ATP = 2 ADP. Catalyzes the reversible transfer of the terminal phosphate group between ATP and AMP. Plays an important role in cellular energy homeostasis and in adenine nucleotide metabolism. Adenylate kinase activity is critical for regulation of the phosphate utilization and the AMP de novo biosynthesis pathways. The chain is Adenylate kinase from Yarrowia lipolytica (strain CLIB 122 / E 150) (Yeast).